We begin with the raw amino-acid sequence, 303 residues long: Cell wall mannoprotein HSP150 (303 aa).

Residues Met-1–Ala-18 form the signal peptide. Residues Ala-19 to Arg-72 constitute a propeptide that is removed on maturation. PIR1/2/3 repeat units lie at residues Lys-71–Ala-89 and Ala-97–Lys-113. A PIR1/2/3 3; degenerate repeat occupies Thr-114–Thr-134. PIR1/2/3 repeat units lie at residues Ala-135–Thr-153, Ala-154–Thr-171, and Thr-172–Ser-190.

This sequence belongs to the PIR protein family. In terms of processing, covalently linked to beta-1,3-glucan of the inner cell wall layer via an alkali-sensitive ester linkage between the gamma-carboxyl group of glutamic acids, arising from specific glutamines within the PIR1/2/3 repeats, and hydroxyl groups of glucoses of beta-1,3-glucan chains. The propeptide is cleaved off in the late Golgi. While both peptides are secreted, only a fraction of the mature glycoprotein is incorporated into the cell wall. Post-translationally, O-glycosylated. Extensively O-mannosylated.

It is found in the secreted. The protein localises to the cell wall. Component of the outer cell wall layer. Required for stability of the cell wall and for optimal growth. Required for resistance against several antifungal and cell wall-perturbing agents and for tolerance to heat shock. This is Cell wall mannoprotein HSP150 (HSP150) from Saccharomyces cerevisiae (strain AWRI1631) (Baker's yeast).